The primary structure comprises 86 residues: Tryptophan-containing weak neurotoxin (86 aa).

An N-terminal signal peptide occupies residues Met-1–Thr-21. Disulfide bonds link Cys-24–Cys-45, Cys-27–Cys-32, Cys-38–Cys-63, Cys-67–Cys-78, and Cys-79–Cys-84.

It belongs to the three-finger toxin family. Ancestral subfamily. Orphan group II sub-subfamily. Monomer in solution. The disulfide bond Cys-27-Cys-32 is probably not needed for efficient interaction of the toxin with the target receptor (Torpedo muscle or alpha-7/CHRNA7 nAChR). In terms of tissue distribution, expressed by the venom gland.

The protein localises to the secreted. Its function is as follows. Neurotoxin that irreversibly inhibits nicotinic acetylcholine receptors (nAChR) and allosterically interacts with muscarinic acetylcholine receptors (mAChR). The loop II is involved in the interaction of this toxin with nAChR and mAChR. On nAChR, it acts as a competitive antagonist (muscle-type and alpha-7/CHRNA7) with IC(50) values in the micromolar range. On mAChR, in presence of ACh, it partially inhibits the effect of acetylcholine (ACh) (allosteric antagonist), whereas in the absence of ACh, it activates the receptor (allosteric agonist). It also shows a very weak inhibition of GABA(A) receptor composed of alpha-1-beta-3-gamma-2 (GABRA1 and GABRB3 and GABRG2) subunits (10 uM inhibit 31% current). In vivo, is nonlethal to mice at concentrations up to 20 mg/kg, but exerts a myorelaxant effect, induces a dose-dependent decrease in blood pressure and an increase in heart rate in mice and rats. In Naja kaouthia (Monocled cobra), this protein is Tryptophan-containing weak neurotoxin.